The following is a 408-amino-acid chain: Aspartate aminotransferase, cytoplasmic (408 aa).

The L-aspartate site is built by Gly-36, Trp-133, and Asn-187. Residue Lys-251 is modified to N6-(pyridoxal phosphate)lysine. Residue Arg-379 coordinates L-aspartate.

This sequence belongs to the class-I pyridoxal-phosphate-dependent aminotransferase family. In terms of assembly, homodimer. Requires pyridoxal 5'-phosphate as cofactor. As to expression, expressed in all somatic tissues including the nervous system.

Its subcellular location is the cytoplasm. It catalyses the reaction L-aspartate + 2-oxoglutarate = oxaloacetate + L-glutamate. In terms of biological role, biosynthesis of L-glutamate from L-aspartate. Important regulator of levels of glutamate, the major excitatory neurotransmitter of the central nervous system. This is Aspartate aminotransferase, cytoplasmic from Caenorhabditis elegans.